The sequence spans 159 residues: RxLR effector protein 24 (159 aa).

A signal peptide spans Met-1 to Gly-18. The short motif at Arg-58 to Arg-82 is the RxLR-dEER element. The interval Glu-109–Thr-159 is RABA-binding domain.

It belongs to the RxLR effector family. As to quaternary structure, interacts with potato RABA GTPases including RABA1a, RABA2a and RABA4a.

Its subcellular location is the secreted. The protein localises to the host cell membrane. The protein resides in the host endomembrane system. Its function is as follows. Effector protein that contributes to pathogen virulence. Targets members of the RABA GTPases subfamily to inhibit vesicular secretion, leading to an accumulation of secretory proteins in the endoplasmic reticulum. The sequence is that of RxLR effector protein 24 from Phytophthora infestans (strain T30-4) (Potato late blight agent).